We begin with the raw amino-acid sequence, 287 residues long: Syntaxin-11 (287 aa).

Positions 41-71 (LESLYRVIQDIQDENQLLLIDVRRLGRQNVR) form a coiled coil. The t-SNARE coiled-coil homology domain maps to 204–266 (LNEIESRHRE…GEAKAQVRKA (63 aa)).

This sequence belongs to the syntaxin family. Interacts with the SNARE proteins SNAP-23 and VAMP.

The protein localises to the membrane. It is found in the golgi apparatus. Its subcellular location is the trans-Golgi network membrane. SNARE that acts to regulate protein transport between late endosomes and the trans-Golgi network. The chain is Syntaxin-11 (Stx11) from Mus musculus (Mouse).